Consider the following 441-residue polypeptide: Nucleolar and spindle-associated protein 1 (441 aa).

Disordered stretches follow at residues 47-186 and 216-267; these read ARKG…PNFK and MNEL…LGLK. 2 stretches are compositionally biased toward polar residues: residues 56-74 and 100-116; these read ESQTSASSCDETEIQISNQ and DSQQNHSEIKISNPTEF. Over residues 117-126 the composition is skewed to basic and acidic residues; it reads QNHEKQESQD. At S124 the chain carries Phosphoserine; by ATM. S135 is subject to Phosphoserine. Residues 152–171 show a composition bias toward basic and acidic residues; the sequence is RDSKVPSEGKKSLYTDESSK. T182 bears the Phosphothreonine mark. Residues 237–382 form an interaction with microtubules region; sequence GRLSVASTPI…HKGKLKPWGQ (146 aa). S240 carries the post-translational modification Phosphoserine. Polar residues predominate over residues 241–264; that stretch reads VASTPISQRRSQGRSCGPASQSTL. T244 carries the phosphothreonine modification. A phosphoserine mark is found at S247, S255, S269, S276, and S311. The tract at residues 286–319 is disordered; the sequence is AATKDNEHKRSLTKTPARKSAHVTVSGGTPKGEA. Phosphothreonine is present on residues T314, T338, and T349. Residues S352 and S363 each carry the phosphoserine modification. The KEN box motif lies at 384-390; it reads KENNYLN. The tract at residues 401-427 is disordered; sequence KTYKQPHLQTKEEQRKKREQERKEKKA. Residues 407–432 adopt a coiled-coil conformation; the sequence is HLQTKEEQRKKREQERKEKKAKVLGM. The span at 409-424 shows a compositional bias: basic and acidic residues; the sequence is QTKEEQRKKREQERKE. K411 bears the N6-acetyllysine mark.

It belongs to the NUSAP family. Interacts with DNA and microtubules. Microtubule bundling is inhibited by IPO7, KPNA2 and KPNB1 while association with DNA is also inhibited by IPO7 and KPNA2. Ubiquitinated. Ubiquitination by FZR1 may lead to proteasome-dependent degradation of this protein. In terms of processing, phosphorylation by ATM in G2/M-phase induces mitotic arrest.

The protein resides in the cytoplasm. The protein localises to the nucleus. It localises to the nucleolus. Its subcellular location is the cytoskeleton. It is found in the spindle. The protein resides in the chromosome. In terms of biological role, microtubule-associated protein with the capacity to bundle and stabilize microtubules. May associate with chromosomes and promote the organization of mitotic spindle microtubules around them. The chain is Nucleolar and spindle-associated protein 1 (NUSAP1) from Homo sapiens (Human).